We begin with the raw amino-acid sequence, 497 residues long: Virion host shutoff protein (497 aa).

Disordered regions lie at residues 122 to 142 and 280 to 373; these read EHDTEFQEDPEENDVSVPPQD and SVIS…SAEA. Over residues 309–326 the composition is skewed to basic and acidic residues; the sequence is PNERRVISWRRQDDHDYD. The span at 327 to 344 shows a compositional bias: acidic residues; sequence SSTEDSDQSDSSEEEEEC.

This sequence belongs to the herpesviridae VHS protein family.

The protein resides in the virion. In terms of biological role, minor structural protein that acts as an endoribonuclease during lytic infection. Degrades host mRNAs in the cytoplasm by cutting them at preferred sites, including some in regions of translation initiation. The sequence is that of Virion host shutoff protein from Equine herpesvirus 1 (strain Ab4p) (EHV-1).